A 64-amino-acid polypeptide reads, in one-letter code: Conotoxin Cal12.4 (64 aa).

The signal sequence occupies residues 1 to 21 (MKLTCMLVVLLLVLPFGDLIA).

This sequence belongs to the conotoxin O1 superfamily. Contains 4 disulfide bonds. In terms of tissue distribution, expressed by the venom duct.

It is found in the secreted. Its function is as follows. Probable neurotoxin. The chain is Conotoxin Cal12.4 from Californiconus californicus (California cone).